A 161-amino-acid polypeptide reads, in one-letter code: Small ribosomal subunit protein uS9 (161 aa).

Belongs to the universal ribosomal protein uS9 family.

The sequence is that of Small ribosomal subunit protein uS9 from Bartonella henselae (strain ATCC 49882 / DSM 28221 / CCUG 30454 / Houston 1) (Rochalimaea henselae).